A 195-amino-acid polypeptide reads, in one-letter code: Transcription factor 15 (195 aa).

The disordered stretch occupies residues Leu-44–Pro-65. Over residues Gly-56–Pro-65 the composition is skewed to low complexity. Ser-60 bears the Phosphoserine mark. The region spanning Arg-70 to Leu-122 is the bHLH domain.

In terms of assembly, heterodimer; efficient DNA binding requires dimerization with another bHLH protein, such as TCF3/E12. Interacts with MEOX2. As to expression, expressed in heart and skeletal muscle. Specifically expressed in a subpopulation of embryonic stem cells (ESCs), that are still undifferentiated but primed for ifferentiation. Expressed in hematopoietic stem cells (HSCs).

The protein localises to the nucleus. In terms of biological role, early transcription factor that plays a key role in somitogenesis, paraxial mesoderm development and regulation of stem cell pluripotency. Essential for the mesenchymal to epithelial transition associated with somite formation. Required for somite morphogenesis, thereby regulating patterning of the axial skeleton and skeletal muscles. Required for proper localization of somite epithelium markers during the mesenchymal to epithelial transition. Also plays a key role in regulation of stem cell pluripotency. Promotes pluripotency exit of embryonic stem cells (ESCs) by priming ESCs for differentiation. Acts as a key regulator of self-renewal of hematopoietic stem cells (HSCs) by mediating HSCs quiescence and long-term self-renewal. Together with MEOX2, regulates transcription in heart endothelial cells to regulate fatty acid transport across heart endothelial cells. Acts by forming a heterodimer with another helix-loop-helix (bHLH) protein, such as TCF3/E12, that binds DNA on E-box motifs (5'-CANNTG-3') and activates transcription of target genes. The chain is Transcription factor 15 from Mus musculus (Mouse).